We begin with the raw amino-acid sequence, 865 residues long: Rifampicin phosphotransferase (865 aa).

Positions 2 to 314 are ATP-binding; the sequence is SGRLVVDLQD…FHIVQSRPIT (313 aa). Positions 23, 117, 132, 136, 183, 297, 309, and 311 each coordinate ATP. Residues 327–752 form a rifampicin-binding region; the sequence is FRVYLSVGHQ…TSEGVALSGA (426 aa). Residues 403–430 are disordered; it reads ENGEFEPTPAETDGGAPPAGDGAEPDEA. Over residues 409 to 424 the composition is skewed to low complexity; the sequence is PTPAETDGGAPPAGDG. Residues 765-863 are swivel phosphohistidine; that stretch reads GLAVSAGTVE…VHGTEGYIEL (99 aa). His823 functions as the Tele-phosphohistidine intermediate in the catalytic mechanism.

Belongs to the rifampicin phosphotransferase family.

The enzyme catalyses rifampicin + ATP + H2O = 21-phosphorifampicin + AMP + phosphate + 2 H(+). Functionally, catalyzes the phosphorylation of rifampicin, also known as rifampin (RIF), leading to its inactivation. Confers high level resistance to a variety of clinically used rifamycin antibiotics. This is Rifampicin phosphotransferase from Streptomyces sp.